The sequence spans 193 residues: Bcl-2-like protein 2 (193 aa).

N-acetylalanine is present on Ala2. A BH4 motif is present at residues 9–29 (DTRALVADFVGYKLRQKGYVC). A BH1 motif is present at residues 85 to 104 (ELFQGGPNWGRLVAFFVFGA). A BH2 motif is present at residues 136-151 (DWIHSSGGWAEFTALY).

Belongs to the Bcl-2 family. As to quaternary structure, interacts with HIF3A isoform 2 (via C-terminus domain). Interacts with BOP. Expressed in almost all myeloid cell lines and in a wide range of tissues, with highest levels in brain, colon, and salivary gland.

It is found in the mitochondrion membrane. Its function is as follows. Promotes cell survival. Blocks dexamethasone-induced apoptosis. Mediates survival of postmitotic Sertoli cells by suppressing death-promoting activity of BAX. The polypeptide is Bcl-2-like protein 2 (Bcl2l2) (Mus musculus (Mouse)).